A 553-amino-acid chain; its full sequence is Putative transport protein YidE (553 aa).

5 consecutive transmembrane segments (helical) span residues 4-24 (IALTVSVLALVAVVGLWIGNI), 28-48 (GVGFGIGGVLFGGIIVGHFVD), 65-85 (FGLILFVYTIGIQVGPGFFAS), 95-115 (LFAVLIVIMGGLVTAILHKIF), and 158-178 (MSYAMAYPFGICGILLTMWLM). RCK C-terminal domains lie at 192–276 (KHES…VIGK) and 279–361 (DTSL…VVGN). 6 helical membrane-spanning segments follow: residues 371 to 391 (MLPVFIGIGLGVLLGSIPLFV), 393 to 413 (GFPVALKLGLAGGPLIMALIL), 437 to 457 (LGIVLFLAVVGLKSGGDFVDT), 464 to 484 (LSWIGYGIFITAIPLITVGLL), 493 to 513 (YLTLCGMLAGSMTDPPALAFA), and 533 to 553 (LVMFLRIITPQLLAVIFWGMG).

This sequence belongs to the AAE transporter (TC 2.A.81) family. YidE subfamily.

It localises to the cell membrane. The protein is Putative transport protein YidE of Salmonella newport (strain SL254).